The following is a 62-amino-acid chain: Photosystem II reaction center protein Z (62 aa).

2 helical membrane-spanning segments follow: residues 8-28 (AVFASIAIPFILVIGVPVVLA) and 41-61 (FSGASSWIGLVFLVGILNSLI).

It belongs to the PsbZ family. In terms of assembly, PSII is composed of 1 copy each of membrane proteins PsbA, PsbB, PsbC, PsbD, PsbE, PsbF, PsbH, PsbI, PsbJ, PsbK, PsbL, PsbM, PsbT, PsbY, PsbZ, Psb30/Ycf12, at least 3 peripheral proteins of the oxygen-evolving complex and a large number of cofactors. It forms dimeric complexes.

Its subcellular location is the plastid. The protein localises to the chloroplast thylakoid membrane. Functionally, may control the interaction of photosystem II (PSII) cores with the light-harvesting antenna, regulates electron flow through the 2 photosystem reaction centers. PSII is a light-driven water plastoquinone oxidoreductase, using light energy to abstract electrons from H(2)O, generating a proton gradient subsequently used for ATP formation. This chain is Photosystem II reaction center protein Z, found in Huperzia lucidula (Shining clubmoss).